The sequence spans 459 residues: Siroheme synthase 2 (459 aa).

The precorrin-2 dehydrogenase /sirohydrochlorin ferrochelatase stretch occupies residues 1–204; that stretch reads MDYLPIFCQL…EDRERVQQLT (204 aa). NAD(+)-binding positions include 22-23 and 43-44; these read EI and LD. Serine 128 carries the post-translational modification Phosphoserine. The interval 216 to 459 is uroporphyrinogen-III C-methyltransferase; sequence GEVTLVGAGP…KLSWFSDQTA (244 aa). An S-adenosyl-L-methionine-binding site is contributed by proline 225. Catalysis depends on aspartate 248, which acts as the Proton acceptor. Lysine 270 functions as the Proton donor in the catalytic mechanism. S-adenosyl-L-methionine is bound by residues 301-303, isoleucine 306, 331-332, methionine 382, and glycine 411; these read GGD and TA.

In the N-terminal section; belongs to the precorrin-2 dehydrogenase / sirohydrochlorin ferrochelatase family. This sequence in the C-terminal section; belongs to the precorrin methyltransferase family.

It catalyses the reaction uroporphyrinogen III + 2 S-adenosyl-L-methionine = precorrin-2 + 2 S-adenosyl-L-homocysteine + H(+). The catalysed reaction is precorrin-2 + NAD(+) = sirohydrochlorin + NADH + 2 H(+). The enzyme catalyses siroheme + 2 H(+) = sirohydrochlorin + Fe(2+). It functions in the pathway cofactor biosynthesis; adenosylcobalamin biosynthesis; precorrin-2 from uroporphyrinogen III: step 1/1. Its pathway is cofactor biosynthesis; adenosylcobalamin biosynthesis; sirohydrochlorin from precorrin-2: step 1/1. The protein operates within porphyrin-containing compound metabolism; siroheme biosynthesis; precorrin-2 from uroporphyrinogen III: step 1/1. It participates in porphyrin-containing compound metabolism; siroheme biosynthesis; siroheme from sirohydrochlorin: step 1/1. It functions in the pathway porphyrin-containing compound metabolism; siroheme biosynthesis; sirohydrochlorin from precorrin-2: step 1/1. In terms of biological role, multifunctional enzyme that catalyzes the SAM-dependent methylations of uroporphyrinogen III at position C-2 and C-7 to form precorrin-2 via precorrin-1. Then it catalyzes the NAD-dependent ring dehydrogenation of precorrin-2 to yield sirohydrochlorin. Finally, it catalyzes the ferrochelation of sirohydrochlorin to yield siroheme. The chain is Siroheme synthase 2 from Pectobacterium atrosepticum (strain SCRI 1043 / ATCC BAA-672) (Erwinia carotovora subsp. atroseptica).